Reading from the N-terminus, the 344-residue chain is Dihydroorotase (344 aa).

Zn(2+)-binding residues include His-13 and His-15. Substrate-binding positions include 15-17 (HLR) and Asn-41. Zn(2+) contacts are provided by Lys-98, His-135, and His-173. At Lys-98 the chain carries N6-carboxylysine. Position 135 (His-135) interacts with substrate. Leu-218 serves as a coordination point for substrate. Residue Asp-247 participates in Zn(2+) binding. Asp-247 is a catalytic residue. Substrate-binding residues include His-251 and Ala-263.

This sequence belongs to the metallo-dependent hydrolases superfamily. DHOase family. Class II DHOase subfamily. As to quaternary structure, homodimer. It depends on Zn(2+) as a cofactor.

It catalyses the reaction (S)-dihydroorotate + H2O = N-carbamoyl-L-aspartate + H(+). It participates in pyrimidine metabolism; UMP biosynthesis via de novo pathway; (S)-dihydroorotate from bicarbonate: step 3/3. Its function is as follows. Catalyzes the reversible cyclization of carbamoyl aspartate to dihydroorotate. The chain is Dihydroorotase from Neisseria meningitidis serogroup C (strain 053442).